The following is a 937-amino-acid chain: Isoleucine--tRNA ligase (937 aa).

The 'HIGH' region motif lies at 58-68 (PYANGNIHIGH). E560 lines the L-isoleucyl-5'-AMP pocket. Residues 601–605 (KMSKS) carry the 'KMSKS' region motif. K604 provides a ligand contact to ATP. Residues C900, C903, C920, and C923 each contribute to the Zn(2+) site.

This sequence belongs to the class-I aminoacyl-tRNA synthetase family. IleS type 1 subfamily. In terms of assembly, monomer. Requires Zn(2+) as cofactor.

Its subcellular location is the cytoplasm. The catalysed reaction is tRNA(Ile) + L-isoleucine + ATP = L-isoleucyl-tRNA(Ile) + AMP + diphosphate. In terms of biological role, catalyzes the attachment of isoleucine to tRNA(Ile). As IleRS can inadvertently accommodate and process structurally similar amino acids such as valine, to avoid such errors it has two additional distinct tRNA(Ile)-dependent editing activities. One activity is designated as 'pretransfer' editing and involves the hydrolysis of activated Val-AMP. The other activity is designated 'posttransfer' editing and involves deacylation of mischarged Val-tRNA(Ile). The polypeptide is Isoleucine--tRNA ligase (Thioalkalivibrio sulfidiphilus (strain HL-EbGR7)).